The primary structure comprises 945 residues: Translation initiation factor IF-2 (945 aa).

2 disordered regions span residues 52–80 (RSHGQSQPKGKITLTRKQTSEIRATDSSG) and 96–357 (MKRD…FQAP). A compositionally biased stretch (acidic residues) spans 153–175 (PEPEPIVEPEPEPEPEPEPEPQP). Composition is skewed to basic and acidic residues over residues 215–283 (DEER…KEAA) and 294–310 (AKTEEKPAGKDAKRTAR). One can recognise a tr-type G domain in the interval 445–614 (PRAPVVTVMG…LLQAEVLELT (170 aa)). The interval 454–461 (GHVDHGKT) is G1. 454 to 461 (GHVDHGKT) is a GTP binding site. A G2 region spans residues 479-483 (GITQH). The interval 500 to 503 (DTPG) is G3. GTP is bound by residues 500–504 (DTPGH) and 554–557 (NKID). The interval 554–557 (NKID) is G4. The tract at residues 590–592 (SAK) is G5.

This sequence belongs to the TRAFAC class translation factor GTPase superfamily. Classic translation factor GTPase family. IF-2 subfamily.

The protein resides in the cytoplasm. Functionally, one of the essential components for the initiation of protein synthesis. Protects formylmethionyl-tRNA from spontaneous hydrolysis and promotes its binding to the 30S ribosomal subunits. Also involved in the hydrolysis of GTP during the formation of the 70S ribosomal complex. The polypeptide is Translation initiation factor IF-2 (Aromatoleum aromaticum (strain DSM 19018 / LMG 30748 / EbN1) (Azoarcus sp. (strain EbN1))).